We begin with the raw amino-acid sequence, 245 residues long: TPR repeat-containing protein PA4299 (245 aa).

The signal sequence occupies residues methionine 1 to glycine 16. Cysteine 17 carries N-palmitoyl cysteine lipidation. Cysteine 17 carries S-diacylglycerol cysteine lipidation. TPR repeat units lie at residues proline 100–glutamate 133, arginine 135–glycine 167, and leucine 169–aspartate 200. A disordered region spans residues serine 210–proline 245.

Its subcellular location is the cell membrane. In Pseudomonas aeruginosa (strain ATCC 15692 / DSM 22644 / CIP 104116 / JCM 14847 / LMG 12228 / 1C / PRS 101 / PAO1), this protein is TPR repeat-containing protein PA4299.